A 1163-amino-acid polypeptide reads, in one-letter code: DNA-directed RNA polymerase subunit beta 2 (1163 aa).

This sequence belongs to the RNA polymerase beta chain family. The RNAP catalytic core consists of 2 alpha, 1 beta, 1 beta' and 1 omega subunit. When a sigma factor is associated with the core the holoenzyme is formed, which can initiate transcription.

The catalysed reaction is RNA(n) + a ribonucleoside 5'-triphosphate = RNA(n+1) + diphosphate. In terms of biological role, DNA-dependent RNA polymerase catalyzes the transcription of DNA into RNA using the four ribonucleoside triphosphates as substrates. This is DNA-directed RNA polymerase subunit beta 2 from Nocardia farcinica (strain IFM 10152).